We begin with the raw amino-acid sequence, 298 residues long: tRNA U34 carboxymethyltransferase (298 aa).

Carboxy-S-adenosyl-L-methionine-binding positions include lysine 69, tryptophan 83, lysine 88, glycine 107, 129–131 (DPS), 156–157 (VE), tyrosine 176, and arginine 291.

The protein belongs to the class I-like SAM-binding methyltransferase superfamily. CmoB family. As to quaternary structure, homotetramer.

The enzyme catalyses carboxy-S-adenosyl-L-methionine + 5-hydroxyuridine(34) in tRNA = 5-carboxymethoxyuridine(34) in tRNA + S-adenosyl-L-homocysteine + H(+). Functionally, catalyzes carboxymethyl transfer from carboxy-S-adenosyl-L-methionine (Cx-SAM) to 5-hydroxyuridine (ho5U) to form 5-carboxymethoxyuridine (cmo5U) at position 34 in tRNAs. The chain is tRNA U34 carboxymethyltransferase from Campylobacter curvus (strain 525.92).